Consider the following 179-residue polypeptide: uncharacterized protein (179 aa).

This is an uncharacterized protein from Mushroom bacilliform virus (isolate Australia/AUS LF-1) (MBV).